We begin with the raw amino-acid sequence, 479 residues long: Dihydrolipoyl dehydrogenase, mitochondrial (479 aa).

The N-terminal 19 residues, 1 to 19, are a transit peptide targeting the mitochondrion; that stretch reads FNRXSPGLQGVSSVPLRTY. Residue Lys50 is modified to N6-acetyllysine; alternate. At Lys50 the chain carries N6-succinyllysine; alternate. FAD contacts are provided by residues 55-64 and Lys73; that span reads EKNETLGGTC. Cys64 and Cys69 form a disulfide bridge. Lys88, Lys106, Lys116, and Lys127 each carry N6-acetyllysine; alternate. 4 positions are modified to N6-succinyllysine; alternate: Lys88, Lys106, Lys116, and Lys127. An FAD-binding site is contributed by Gly138. Residues Lys143 and Lys150 each carry the N6-succinyllysine modification. 167-169 is a binding site for FAD; the sequence is TGS. Residues 204-211 and Glu227 each bind NAD(+); that span reads GAGVIGVE. Lys257 and Lys261 each carry N6-succinyllysine. Val262 is an NAD(+) binding site. The residue at position 269 (Ser269) is a Phosphoserine. NAD(+) is bound at residue Gly298. Lys330 bears the N6-acetyllysine mark. FAD contacts are provided by residues Asp339 and 345-348; that span reads MLAH. Lys394 bears the N6-acetyllysine; alternate mark. Lys394 carries the post-translational modification N6-succinyllysine; alternate. Residues Lys401 and Lys404 each carry the N6-acetyllysine modification. Residue Lys414 is modified to N6-succinyllysine. His471 acts as the Proton acceptor in catalysis.

Belongs to the class-I pyridine nucleotide-disulfide oxidoreductase family. In terms of assembly, homodimer. Part of the multimeric pyruvate dehydrogenase complex that contains multiple copies of pyruvate dehydrogenase (subunits PDHA (PDHA1 or PDHA2) and PDHB, E1), dihydrolipoamide acetyltransferase (DLAT, E2) and lipoamide dehydrogenase (DLD, E3). These subunits are bound to an inner core composed of about 48 DLAT and 12 PDHX molecules (by non covalent bonds). The 2-oxoglutarate dehydrogenase complex is composed of OGDH (2-oxoglutarate dehydrogenase; E1), DLST (dihydrolipoamide succinyltransferase; E2) and DLD (dihydrolipoamide dehydrogenase; E3). It contains multiple copies of the three enzymatic components (E1, E2 and E3). In the nucleus, the 2-oxoglutarate dehydrogenase complex associates with KAT2A. Interacts with PDHX. FAD is required as a cofactor. Tyrosine phosphorylated. Expressed in testis (at protein level).

It localises to the mitochondrion matrix. The protein localises to the nucleus. Its subcellular location is the cell projection. It is found in the cilium. The protein resides in the flagellum. It localises to the cytoplasmic vesicle. The protein localises to the secretory vesicle. Its subcellular location is the acrosome. It catalyses the reaction N(6)-[(R)-dihydrolipoyl]-L-lysyl-[protein] + NAD(+) = N(6)-[(R)-lipoyl]-L-lysyl-[protein] + NADH + H(+). In terms of biological role, lipoamide dehydrogenase is a component of the glycine cleavage system as well as an E3 component of three alpha-ketoacid dehydrogenase complexes (pyruvate-, alpha-ketoglutarate-, and branched-chain amino acid-dehydrogenase complex). The 2-oxoglutarate dehydrogenase complex is mainly active in the mitochondrion. A fraction of the 2-oxoglutarate dehydrogenase complex also localizes in the nucleus and is required for lysine succinylation of histones: associates with KAT2A on chromatin and provides succinyl-CoA to histone succinyltransferase KAT2A. In monomeric form may have additional moonlighting function as serine protease. Involved in the hyperactivation of spermatazoa during capacitation and in the spermatazoal acrosome reaction. This chain is Dihydrolipoyl dehydrogenase, mitochondrial (DLD), found in Mesocricetus auratus (Golden hamster).